Here is a 223-residue protein sequence, read N- to C-terminus: UPF0441 protein YgiB (223 aa).

A compositionally biased stretch (low complexity) spans 178-195 (TVPKTAMAPKPATTTTVT). The segment at 178-223 (TVPKTAMAPKPATTTTVTRGGFGESIAKQSTMQRSATGTSSRSMGG) is disordered. Positions 204–223 (AKQSTMQRSATGTSSRSMGG) are enriched in polar residues.

The protein belongs to the UPF0441 family.

In Shigella boydii serotype 4 (strain Sb227), this protein is UPF0441 protein YgiB.